A 362-amino-acid chain; its full sequence is Chorismate synthase (362 aa).

NADP(+)-binding residues include arginine 48 and arginine 54. FMN contacts are provided by residues 131–133 (RSS), 243–244 (NA), glycine 287, 302–306 (KPTSS), and arginine 328.

The protein belongs to the chorismate synthase family. Homotetramer. The cofactor is FMNH2.

It catalyses the reaction 5-O-(1-carboxyvinyl)-3-phosphoshikimate = chorismate + phosphate. It functions in the pathway metabolic intermediate biosynthesis; chorismate biosynthesis; chorismate from D-erythrose 4-phosphate and phosphoenolpyruvate: step 7/7. Catalyzes the anti-1,4-elimination of the C-3 phosphate and the C-6 proR hydrogen from 5-enolpyruvylshikimate-3-phosphate (EPSP) to yield chorismate, which is the branch point compound that serves as the starting substrate for the three terminal pathways of aromatic amino acid biosynthesis. This reaction introduces a second double bond into the aromatic ring system. This Rhodopseudomonas palustris (strain BisB18) protein is Chorismate synthase.